A 314-amino-acid chain; its full sequence is Transmembrane protein 178B (314 aa).

A signal peptide spans Met-1–Ser-24. The interval Asp-32–Arg-83 is disordered. Residues His-36–Gly-45 show a composition bias toward basic residues. Transmembrane regions (helical) follow at residues Ala-194 to Gly-214, Leu-228 to Ile-248, and Met-274 to Ala-294.

It belongs to the TMEM178 family.

The protein localises to the membrane. This chain is Transmembrane protein 178B (tmem178b), found in Xenopus tropicalis (Western clawed frog).